The sequence spans 184 residues: Peptide deformylase (184 aa).

Residues C99 and H141 each coordinate Fe cation. E142 is a catalytic residue. H145 contributes to the Fe cation binding site.

It belongs to the polypeptide deformylase family. The cofactor is Fe(2+).

The enzyme catalyses N-terminal N-formyl-L-methionyl-[peptide] + H2O = N-terminal L-methionyl-[peptide] + formate. Removes the formyl group from the N-terminal Met of newly synthesized proteins. Requires at least a dipeptide for an efficient rate of reaction. N-terminal L-methionine is a prerequisite for activity but the enzyme has broad specificity at other positions. The polypeptide is Peptide deformylase (Chlamydia abortus (strain DSM 27085 / S26/3) (Chlamydophila abortus)).